A 373-amino-acid chain; its full sequence is Packaging protein 3 (373 aa).

Residues 1-32 (MHPVLRQMRPQPRATTASAAVALSGSGEQEEP) are disordered. The interval 1-150 (MHPVLRQMRP…VTEERNFQKS (150 aa)) is interaction with packaging protein 1. 2 positions are modified to phosphoserine; by host: serine 52 and serine 334.

This sequence belongs to the adenoviridae packaging protein 3 family. In terms of assembly, part of the genome packaging complex composed of packaging proteins 1, 2 and 3; this complex specifically binds to the packaging sequence on the left end of viral genomic DNA and performs packaging of the viral genome. Interacts with hexon-linking protein IIIa; this interaction is required to promote correct genome packaging. Cleaved at different sites by the viral protease during virion maturation.

It is found in the host nucleus. Functionally, involved in viral genome packaging through its interaction with packaging proteins 1 and 2. After proteolytic cleavage by adenovirus protease, L1 52/55k protein is removed from the capsid during viral maturation. The polypeptide is Packaging protein 3 (Homo sapiens (Human)).